A 137-amino-acid chain; its full sequence is MWNPNAGPNPYPPQVVCPGGSNPACPPPLNPAFPPGPCPPGIPQGNPAFPPCRPPYPVPQPGCPGYQPSGPYPPPYPPPAPGMCPVNPPAPGMVGPGIVIDKKTRKKMKKAHKKSHKHHKHGKHSSSSSSSSSSDSD.

2 disordered regions span residues 26–54 (PPPL…PCRP) and 94–137 (VGPG…SDSD). Basic residues predominate over residues 103-124 (KTRKKMKKAHKKSHKHHKHGKH). Residues 125-137 (SSSSSSSSSSDSD) are compositionally biased toward low complexity.

It localises to the nucleus. Negatively regulates TSP1 expression at the level of transcription. This down-regulation was shown to reduce taxane-induced apoptosis. This chain is Proline-rich protein 13 (Prr13), found in Mus musculus (Mouse).